Here is a 179-residue protein sequence, read N- to C-terminus: Large ribosomal subunit protein uL5 (179 aa).

The protein belongs to the universal ribosomal protein uL5 family. In terms of assembly, part of the 50S ribosomal subunit; part of the 5S rRNA/L5/L18/L25 subcomplex. Contacts the 5S rRNA and the P site tRNA. Forms a bridge to the 30S subunit in the 70S ribosome.

In terms of biological role, this is one of the proteins that bind and probably mediate the attachment of the 5S RNA into the large ribosomal subunit, where it forms part of the central protuberance. In the 70S ribosome it contacts protein S13 of the 30S subunit (bridge B1b), connecting the 2 subunits; this bridge is implicated in subunit movement. Contacts the P site tRNA; the 5S rRNA and some of its associated proteins might help stabilize positioning of ribosome-bound tRNAs. In Synechococcus sp. (strain CC9311), this protein is Large ribosomal subunit protein uL5.